A 602-amino-acid chain; its full sequence is uncharacterized protein (602 aa).

Residues Asn305, Asn497, and Asn577 are each glycosylated (N-linked (GlcNAc...) asparagine).

In terms of processing, N-glycosylated.

The protein resides in the vacuole. This is an uncharacterized protein from Saccharomyces cerevisiae (strain ATCC 204508 / S288c) (Baker's yeast).